Here is a 157-residue protein sequence, read N- to C-terminus: Probable Brix domain-containing ribosomal biogenesis protein (157 aa).

The Brix domain maps to 1–157; that stretch reads MLVTSSRKPS…KLNLRGFKKY (157 aa).

Its function is as follows. Probably involved in the biogenesis of the ribosome. In Methanosarcina barkeri (strain Fusaro / DSM 804), this protein is Probable Brix domain-containing ribosomal biogenesis protein.